The following is a 345-amino-acid chain: 3-isopropylmalate dehydrogenase (345 aa).

NAD(+) is bound at residue 76-87 (GPKYDNAPVRPE). The substrate site is built by Arg-94, Arg-104, Arg-132, and Asp-216. Mg(2+) is bound by residues Asp-216, Asp-240, and Asp-244. 274–286 (GSAPDIAGQGIAN) contacts NAD(+).

This sequence belongs to the isocitrate and isopropylmalate dehydrogenases family. LeuB type 1 subfamily. Homodimer. The cofactor is Mg(2+). It depends on Mn(2+) as a cofactor.

The protein resides in the cytoplasm. It carries out the reaction (2R,3S)-3-isopropylmalate + NAD(+) = 4-methyl-2-oxopentanoate + CO2 + NADH. It functions in the pathway amino-acid biosynthesis; L-leucine biosynthesis; L-leucine from 3-methyl-2-oxobutanoate: step 3/4. Catalyzes the oxidation of 3-carboxy-2-hydroxy-4-methylpentanoate (3-isopropylmalate) to 3-carboxy-4-methyl-2-oxopentanoate. The product decarboxylates to 4-methyl-2 oxopentanoate. The sequence is that of 3-isopropylmalate dehydrogenase from Streptococcus thermophilus (strain CNRZ 1066).